The following is a 660-amino-acid chain: Leucine-rich repeat transmembrane protein FLRT2 (660 aa).

An N-terminal signal peptide occupies residues Met1–Ala35. Cystine bridges form between Cys36-Cys42 and Cys40-Cys49. Residues Cys36–Glu63 enclose the LRRNT domain. The Extracellular segment spans residues Cys36–Pro540. LRR repeat units lie at residues Pro62–Val87, Gln88–Pro108, Lys109–Gln131, Leu132–Glu157, Ile159–Asp181, Gln183–Asn202, Leu203–His228, Leu229–Gly251, Thr252–Asn274, and Leu275–His298. An N-linked (GlcNAc...) asparagine glycan is attached at Asn202. The 53-residue stretch at Asn310–Thr362 folds into the LRRCT domain. Disulfide bonds link Cys314/Cys339 and Cys316/Cys360. Low complexity predominate over residues Thr371–Val396. Residues Thr371 to Gly413 are disordered. A Fibronectin type-III domain is found at Pro419–Ser517. Residues Phe541–Val561 form a helical membrane-spanning segment. Residues Phe562–Thr660 lie on the Cytoplasmic side of the membrane.

Self-associates (via leucine-rich repeats), giving rise to homooligomers. Interacts with FGFR1. Interacts with FGFR2. Interacts (via extracellular domain) with ADGRL1/LPHN1. Interacts (via extracellular domain) with ADGRL3 (via olfactomedin-like domain). Interacts (via extracellular domain) with UNC5D (via the first Ig-like domain). Can also interact (via extracellular domain) with UNC5B, but with much lower affinity. Interacts (via extracellular domain) with FN1. Post-translationally, N-glycosylated. Proteolytic cleavage in the juxtamembrane region gives rise to a soluble ectodomain. Cleavage is probably effected by a metalloprotease. As to expression, detected in adult brain (at protein level).

It is found in the cell membrane. The protein localises to the endoplasmic reticulum membrane. Its subcellular location is the cell junction. The protein resides in the focal adhesion. It localises to the secreted. It is found in the extracellular space. The protein localises to the extracellular matrix. Its subcellular location is the synapse. The protein resides in the synaptosome. It localises to the microsome membrane. Functions in cell-cell adhesion, cell migration and axon guidance. Mediates cell-cell adhesion via its interactions with ADGRL3 and probably also other latrophilins that are expressed at the surface of adjacent cells. May play a role in the migration of cortical neurons during brain development via its interaction with UNC5D. Mediates axon growth cone collapse and plays a repulsive role in neuron guidance via its interaction with UNC5D, and possibly also other UNC-5 family members. Plays a role in fibroblast growth factor-mediated signaling cascades. Required for normal organization of the cardiac basement membrane during embryogenesis, and for normal embryonic epicardium and heart morphogenesis. The chain is Leucine-rich repeat transmembrane protein FLRT2 from Mus musculus (Mouse).